Here is a 496-residue protein sequence, read N- to C-terminus: L-arabinose isomerase (496 aa).

Mn(2+)-binding residues include E302, E329, H346, and H445.

Belongs to the arabinose isomerase family. Mn(2+) is required as a cofactor.

It catalyses the reaction beta-L-arabinopyranose = L-ribulose. It participates in carbohydrate degradation; L-arabinose degradation via L-ribulose; D-xylulose 5-phosphate from L-arabinose (bacterial route): step 1/3. Catalyzes the conversion of L-arabinose to L-ribulose. This is L-arabinose isomerase from Thermotoga maritima (strain ATCC 43589 / DSM 3109 / JCM 10099 / NBRC 100826 / MSB8).